The sequence spans 439 residues: Testican-1 (439 aa).

A signal peptide spans 1-21 (MPAIAVLAAAAAAWCFLQVES). Intrachain disulfides connect C86-C97, C91-C107, C136-C166, C139-C159, and C148-C180. The region spanning 130–182 (PSNLVKCKPCPVAQSAMVCGSDGHSYTSKCKLEFHACSTGKSLATLCDGPCPC) is the Kazal-like domain. O-linked (GalNAc...) threonine glycosylation is present at T228. The Thyroglobulin type-1 domain maps to 310–376 (GLPCQNEMNR…GSRKQGAVSC (67 aa)). 3 disulfide bridges follow: C313–C337, C348–C355, and C357–C376. O-linked (Xyl...) (glycosaminoglycan) serine glycosylation is found at S383 and S388. Positions 415–439 (VHTRAVTEDDEDEDDDKEDEVGYIW) are disordered. Over residues 422 to 439 (EDDEDEDDDKEDEVGYIW) the composition is skewed to acidic residues.

In terms of processing, O-glycosylated. Glycosaminoglycan that contains chondroitin sulfate and heparan sulfate.

Its subcellular location is the secreted. It localises to the extracellular space. It is found in the extracellular matrix. May play a role in cell-cell and cell-matrix interactions. May contribute to various neuronal mechanisms in the central nervous system. The chain is Testican-1 (SPOCK1) from Homo sapiens (Human).